Reading from the N-terminus, the 659-residue chain is Interferon-induced GTP-binding protein Mx1 (659 aa).

Residue Met-1 is modified to N-acetylmethionine. Residues 1 to 40 form a disordered region; that stretch reads MVNSKGEITDSDPGSNHLLLNGLPDKAGKNQDTEPENSLC. A Dynamin-type G domain is found at 65-338; that stretch reads DLALPAIAVI…LITHICKTLP (274 aa). The segment at 75 to 82 is G1 motif; that stretch reads GDQSSGKS. 75–82 is a binding site for GTP; the sequence is GDQSSGKS. A G2 motif region spans residues 100–102; the sequence is VTR. The tract at residues 176–179 is G3 motif; it reads DLPG. Residues 176 to 180 and 245 to 248 contribute to the GTP site; these read DLPGI and TKPD. The G4 motif stretch occupies residues 245 to 248; the sequence is TKPD. The G5 motif stretch occupies residues 277–280; the sequence is KCRG. The segment at 339–364 is bundle signaling element (BSE); that stretch reads LLENQIKENHEKITEELKKYGSDVPE. The interval 364-531 is middle domain; that stretch reads EEEHEKMFFL…HFQMEQIVYC (168 aa). The tract at residues 365 to 629 is stalk; sequence EEHEKMFFLI…KDTYNWLLKE (265 aa). The interval 552–555 is critical for lipid-binding; sequence KNKK. The region spanning 571-659 is the GED domain; the sequence is LSEIFEHLLA…ARRRLAKFPG (89 aa).

Belongs to the TRAFAC class dynamin-like GTPase superfamily. Dynamin/Fzo/YdjA family. Homooligomer. Oligomerizes into multimeric filamentous or ring-like structures by virtue of its stalk domain. Oligomerization is critical for GTPase activity, protein stability, and recognition of viral target structures. Interacts with TRPC1, TRPC3, TRPC4, TRPC5, TRPC6 and TRPC7. Interacts with HSPA5. Interacts with TUBB/TUBB5. Interacts with DDX39A and DDX39B. In terms of processing, ISGylated.

The protein resides in the cytoplasm. It is found in the endoplasmic reticulum membrane. Its subcellular location is the perinuclear region. Its function is as follows. Interferon-induced dynamin-like GTPase with antiviral activity. The chain is Interferon-induced GTP-binding protein Mx1 (MX1) from Phoca vitulina (Harbor seal).